Here is a 1307-residue protein sequence, read N- to C-terminus: Histone-lysine N-methyltransferase SETDB1 (1307 aa).

Positions 30–65 (VEELGISMEELRQYIDEELEKMDCIQQRKKQLAELE) form a coiled coil. Ser112 and Ser117 each carry phosphoserine. Thr120 is modified (phosphothreonine). The interval 127 to 148 (DEDDDVLSIDSGDAGSRTPKDQ) is disordered. Residue Lys182 forms a Glycyl lysine isopeptide (Lys-Gly) (interchain with G-Cter in SUMO2); alternate linkage. Residue Lys182 forms a Glycyl lysine isopeptide (Lys-Gly) (interchain with G-Cter in ubiquitin); alternate linkage. 2 consecutive Tudor domains span residues 257-320 (KLFV…LKKT) and 347-403 (LLKS…SMKT). 3 disordered regions span residues 404–424 (SSASAMEKKQGGQLRTRPNMG), 444–512 (IQFK…TLSE), and 531–570 (SVTSTPASAAPPVPPVPPGPPTPPGPPAPPGPLAPPAFHG). Residues 454 to 467 (PIAPPAPLPIPPLS) are compositionally biased toward pro residues. Residues 476-494 (ESQLAQSRKQVAKKSTSFR) are compositionally biased toward polar residues. The span at 495–512 (PGSVGSGHSSPTSSTLSE) shows a compositional bias: low complexity. Residues 539-565 (AAPPVPPVPPGPPTPPGPPAPPGPLAP) are compositionally biased toward pro residues. The 72-residue stretch at 611–682 (YRGKNPLLVP…EMFCLDPYVL (72 aa)) folds into the MBD domain. The region spanning 744–817 (VGCDCKDGCR…MCTNRLVQHG (74 aa)) is the Pre-SET domain. Cys746, Cys748, Cys752, Cys758, Cys760, Cys798, Cys802, Cys804, and Cys809 together coordinate Zn(2+). The SET domain maps to 820 to 1282 (VRLQLFKTQN…AGTELTWDYN (463 aa)). S-adenosyl-L-methionine-binding positions include 830 to 832 (KGW), Asp868, and Tyr870. A Glycyl lysine isopeptide (Lys-Gly) (interchain with G-Cter in ubiquitin) cross-link involves residue Lys884. The disordered stretch occupies residues 885–1174 (EGYESDVPTS…KNLSGPTKRQ (290 aa)). Acidic residues predominate over residues 913–924 (EDPEESNDDSSD). Residues 950 to 966 (GQKENELSEMTSKDSRP) show a composition bias toward basic and acidic residues. Position 1042 is a phosphoserine (Ser1042). A compositionally biased stretch (basic and acidic residues) spans 1048–1066 (FKDEGDNKQPKKEDPENRN). Residue Lys1049 forms a Glycyl lysine isopeptide (Lys-Gly) (interchain with G-Cter in SUMO2); alternate linkage. Lys1049 is covalently cross-linked (Glycyl lysine isopeptide (Lys-Gly) (interchain with G-Cter in SUMO1); alternate). Residues Lys1055 and Lys1085 each participate in a glycyl lysine isopeptide (Lys-Gly) (interchain with G-Cter in SUMO2) cross-link. The segment covering 1097-1112 (SVLQSQRVVTSTQSNP) has biased composition (polar residues). Residues 1116 to 1131 (LTLSSSTESEGESGTS) are compositionally biased toward low complexity. The segment covering 1137 to 1156 (GHTSATAVDSDDIQTISSGS) has biased composition (polar residues). Lys1165 is covalently cross-linked (Glycyl lysine isopeptide (Lys-Gly) (interchain with G-Cter in SUMO2)). Lys1186 and Lys1194 each carry N6,N6,N6-trimethyllysine; alternate. An N6,N6-dimethyllysine; alternate mark is found at Lys1186 and Lys1194. S-adenosyl-L-methionine-binding positions include Arg1236 and 1239 to 1240 (NH). Zn(2+)-binding residues include Cys1242, Cys1295, Cys1297, and Cys1302. In terms of domain architecture, Post-SET spans 1291 to 1307 (KELLCCCGAIECRGRLL).

The protein belongs to the class V-like SAM-binding methyltransferase superfamily. Histone-lysine methyltransferase family. Suvar3-9 subfamily. In terms of assembly, part of a complex containing at least CDYL, REST, WIZ, SETDB1, EHMT1 and EHMT2. Forms a complex with ATRX, TRIM28 and ZNF274. Probably part of a corepressor complex containing ZNF304, TRIM28, SETDB1 and DNMT1. Interacts with TRIM28/TIF1B. Interacts with ATF7IP and ATF7IP2; the interaction with ATF7IP is required to stimulate histone methyltransferase activity and facilitate the conversion of dimethylated to trimethylated H3 'Lys-9'. Interacts with MBD1; interaction is abolished when MBD1 is sumoylated. Interacts with CBX1 and CBX5. Interacts with DNMT3A and DNMT3B. Interacts with SUMO2. Interacts with MPHOSPH8. Interacts with ERG. Interacts with HDAC1, HDAC2, SIN3A, SIN3B. Interacts with ATRX. Interacts with RESF1. Interacts with ZNF638. Interacts with TASOR. Interacts with ZNF263; recruited to the SIX3 promoter along with other proteins involved in chromatin modification and transcriptional corepression where it contributes to transcriptional repression. Interacts with PHF13; the interaction probably enhances SETDB1 chromatin-associated levels and activity. Interacts with VRK1. In terms of processing, degraded by the proteasome, shielded by interaction with ATF7IP. Monoubiquitinated at Lys-884 by E2 enzymes UBE2E family. The conjugated-Ub is protected from deubiquitination through the SET domain. Monoubiquitination at Lys-884 is required for catalytic activity and H3K9 methylation and endogenous retrovirus silencing. In terms of tissue distribution, ubiquitously expressed. Strong expression in liver and testis. Expressed in the brain, lungs, kidneys, uterus and seminal vesicles.

It localises to the nucleus. The protein resides in the chromosome. It carries out the reaction N(6),N(6)-dimethyl-L-lysyl(9)-[histone H3] + S-adenosyl-L-methionine = N(6),N(6),N(6)-trimethyl-L-lysyl(9)-[histone H3] + S-adenosyl-L-homocysteine + H(+). Histone methyltransferase that specifically trimethylates 'Lys-9' of histone H3. H3 'Lys-9' trimethylation represents a specific tag for epigenetic transcriptional repression by recruiting HP1 (CBX1, CBX3 and/or CBX5) proteins to methylated histones. Mainly functions in euchromatin regions, thereby playing a central role in the silencing of euchromatic genes. H3 'Lys-9' trimethylation is coordinated with DNA methylation. Probably forms a complex with MBD1 and ATF7IP that represses transcription and couples DNA methylation and histone 'Lys-9' trimethylation. Its activity is dependent on MBD1 and is heritably maintained through DNA replication by being recruited by CAF-1. SETDB1 is targeted to histone H3 by TRIM28/TIF1B, a factor recruited by KRAB zinc-finger proteins. Probably forms a corepressor complex required for activated KRAS-mediated promoter hypermethylation and transcriptional silencing of tumor suppressor genes (TSGs) or other tumor-related genes in colorectal cancer (CRC) cells. Required to maintain a transcriptionally repressive state of genes in undifferentiated embryonic stem cells (ESCs). In ESCs, in collaboration with TRIM28, is also required for H3K9me3 and silencing of endogenous and introduced retroviruses in a DNA-methylation independent-pathway. Associates at promoter regions of tumor suppressor genes (TSGs) leading to their gene silencing. The SETDB1-TRIM28-ZNF274 complex may play a role in recruiting ATRX to the 3'-exons of zinc-finger coding genes with atypical chromatin signatures to establish or maintain/protect H3K9me3 at these transcriptionally active regions. The protein is Histone-lysine N-methyltransferase SETDB1 of Mus musculus (Mouse).